The sequence spans 156 residues: MAETNEKQAAHPEFRMQKMYTKDLSFESPSAPAVFLDGGSEPKVELNLQLNNKKVDDDHWEVSLEINAKVTADDGAKTLFILELEHAAIFWVRNIPEEHLAMVLAVDCPTLLFPFTRQIASQVSVDGGFAPFLMEPVNFMALFQGAKKQEQEQTAN.

Belongs to the SecB family. As to quaternary structure, homotetramer, a dimer of dimers. One homotetramer interacts with 1 SecA dimer.

It is found in the cytoplasm. In terms of biological role, one of the proteins required for the normal export of preproteins out of the cell cytoplasm. It is a molecular chaperone that binds to a subset of precursor proteins, maintaining them in a translocation-competent state. It also specifically binds to its receptor SecA. The protein is Protein-export protein SecB of Desulfotalea psychrophila (strain LSv54 / DSM 12343).